We begin with the raw amino-acid sequence, 292 residues long: Probable porphobilinogen deaminase (292 aa).

Cys-233 is modified (S-(dipyrrolylmethanemethyl)cysteine).

Belongs to the HMBS family. Dipyrromethane serves as cofactor.

The catalysed reaction is 4 porphobilinogen + H2O = hydroxymethylbilane + 4 NH4(+). The protein operates within porphyrin-containing compound metabolism; protoporphyrin-IX biosynthesis; coproporphyrinogen-III from 5-aminolevulinate: step 2/4. Tetrapolymerization of the monopyrrole PBG into the hydroxymethylbilane pre-uroporphyrinogen in several discrete steps. The sequence is that of Probable porphobilinogen deaminase (hemC) from Methanocaldococcus jannaschii (strain ATCC 43067 / DSM 2661 / JAL-1 / JCM 10045 / NBRC 100440) (Methanococcus jannaschii).